The sequence spans 276 residues: Putative ripening-related protein 5 (276 aa).

An N-terminal signal peptide occupies residues 1–18 (MAMIFLLAALSTTHLASS).

Belongs to the kiwellin family.

The protein resides in the secreted. This is Putative ripening-related protein 5 from Oryza sativa subsp. japonica (Rice).